We begin with the raw amino-acid sequence, 314 residues long: Olfactory receptor 1E16 (314 aa).

The Extracellular portion of the chain corresponds to 1-29; the sequence is MTERNKTVISQFLLLGLPIPPEHQQLFYA. An N-linked (GlcNAc...) asparagine glycan is attached at N5. Residues 30–50 form a helical membrane-spanning segment; that stretch reads LFLVMYLTTVLGNLIIIILII. Topologically, residues 51–57 are cytoplasmic; sequence LDSHLHT. Residues 58 to 78 form a helical membrane-spanning segment; the sequence is PMYLFLSNLSFSDLCFSSVTM. The Extracellular portion of the chain corresponds to 79 to 97; it reads PKLLQNMQSQVPSIPYAGC. C97 and C179 are disulfide-bonded. Residues 98–118 form a helical membrane-spanning segment; it reads LAQIYFFLFFGDLGNFLLVAM. At 119–143 the chain is on the cytoplasmic side; that stretch reads AYDRYVAICYPLHYTTIMSPRLCVS. The helical transmembrane segment at 144-164 threads the bilayer; sequence LVVLSWVLTTFHAMLHTLLMA. The Extracellular segment spans residues 165-196; the sequence is RLSFCEDNVIPHYFCDMSALLKLACSDTRVNE. A helical membrane pass occupies residues 197-217; the sequence is VVIFIVASIFLVLPFALITMS. Topologically, residues 218–239 are cytoplasmic; sequence YVRIVSSILKVPSSQGIYKAFS. Residues 240–260 traverse the membrane as a helical segment; sequence TCGSHLSVVSLFYGTVIGLYL. Topologically, residues 261-271 are extracellular; it reads SPSSNNSTVKD. N-linked (GlcNAc...) asparagine glycosylation is found at N265 and N266. Residues 272–292 form a helical membrane-spanning segment; it reads TVMSLMYTVVTPMLNPFIYSL. At 293–314 the chain is on the cytoplasmic side; that stretch reads RNRDIKGALERVFCKRKIQLNL.

It belongs to the G-protein coupled receptor 1 family. In terms of tissue distribution, olfactory epithelium.

Its subcellular location is the cell membrane. In terms of biological role, odorant receptor. Activated by a lily-derived aldehyde as well as other odorants. May signal through an inositol 1,4,5-trisphosphate (IP3) second messenger system. This Mus musculus (Mouse) protein is Olfactory receptor 1E16.